The primary structure comprises 396 residues: Elongation factor Tu (396 aa).

One can recognise a tr-type G domain in the interval 10-205; that stretch reads KPHVNIGTIG…AVDESIPDPV (196 aa). The segment at 19–26 is G1; the sequence is GHVDHGKT. Residue 19–26 participates in GTP binding; that stretch reads GHVDHGKT. Threonine 26 provides a ligand contact to Mg(2+). The interval 62-66 is G2; sequence GITIN. The tract at residues 83-86 is G3; it reads DAPG. GTP-binding positions include 83-87 and 138-141; these read DAPGH and NKAD. A G4 region spans residues 138 to 141; the sequence is NKAD. The interval 175–177 is G5; the sequence is SGL.

The protein belongs to the TRAFAC class translation factor GTPase superfamily. Classic translation factor GTPase family. EF-Tu/EF-1A subfamily. Monomer.

It localises to the cytoplasm. It catalyses the reaction GTP + H2O = GDP + phosphate + H(+). Functionally, GTP hydrolase that promotes the GTP-dependent binding of aminoacyl-tRNA to the A-site of ribosomes during protein biosynthesis. The chain is Elongation factor Tu from Nocardia farcinica (strain IFM 10152).